Reading from the N-terminus, the 586-residue chain is Probable transporter AQR1 (586 aa).

2 disordered regions span residues methionine 1 to alanine 44 and glutamate 61 to glutamine 82. The Extracellular segment spans residues methionine 1–lysine 99. Positions asparagine 19 to asparagine 40 are enriched in basic and acidic residues. A helical membrane pass occupies residues tryptophan 100–tyrosine 120. At tyrosine 121 to asparagine 139 the chain is on the cytoplasmic side. A helical transmembrane segment spans residues valine 140–alanine 160. The Extracellular segment spans residues aspartate 161–arginine 166. The helical transmembrane segment at proline 167–proline 187 threads the bilayer. Residue serine 188 is a topological domain, cytoplasmic. Residues tyrosine 189–isoleucine 209 form a helical membrane-spanning segment. The Extracellular portion of the chain corresponds to serine 210 to threonine 225. The chain crosses the membrane as a helical span at residues phenylalanine 226–alanine 246. The Cytoplasmic portion of the chain corresponds to valine 247 to arginine 255. A helical transmembrane segment spans residues alanine 256–leucine 276. The Extracellular portion of the chain corresponds to proline 277 to lysine 334. Residues isoleucine 335–tryptophan 355 form a helical membrane-spanning segment. Over threonine 356–histidine 374 the chain is Cytoplasmic. Residues leucine 375–phenylalanine 395 form a helical membrane-spanning segment. Residues threonine 396–leucine 433 lie on the Extracellular side of the membrane. The helical transmembrane segment at valine 434–isoleucine 454 threads the bilayer. Topologically, residues aspartate 455 to arginine 459 are cytoplasmic. A helical transmembrane segment spans residues isoleucine 460–threonine 480. Over serine 481–threonine 523 the chain is Extracellular. Residues valine 524–isoleucine 544 form a helical membrane-spanning segment. Over proline 545–asparagine 586 the chain is Cytoplasmic.

Belongs to the major facilitator superfamily. CAR1 family.

The protein localises to the membrane. Its function is as follows. Probable transporter that confers resistance to short-chain monocarboxylic acids and quinidine. The polypeptide is Probable transporter AQR1 (AQR1) (Saccharomyces cerevisiae (strain ATCC 204508 / S288c) (Baker's yeast)).